Reading from the N-terminus, the 178-residue chain is ATP synthase subunit delta (178 aa).

This sequence belongs to the ATPase delta chain family. As to quaternary structure, F-type ATPases have 2 components, F(1) - the catalytic core - and F(0) - the membrane proton channel. F(1) has five subunits: alpha(3), beta(3), gamma(1), delta(1), epsilon(1). F(0) has three main subunits: a(1), b(2) and c(10-14). The alpha and beta chains form an alternating ring which encloses part of the gamma chain. F(1) is attached to F(0) by a central stalk formed by the gamma and epsilon chains, while a peripheral stalk is formed by the delta and b chains.

The protein resides in the cell membrane. F(1)F(0) ATP synthase produces ATP from ADP in the presence of a proton or sodium gradient. F-type ATPases consist of two structural domains, F(1) containing the extramembraneous catalytic core and F(0) containing the membrane proton channel, linked together by a central stalk and a peripheral stalk. During catalysis, ATP synthesis in the catalytic domain of F(1) is coupled via a rotary mechanism of the central stalk subunits to proton translocation. Functionally, this protein is part of the stalk that links CF(0) to CF(1). It either transmits conformational changes from CF(0) to CF(1) or is implicated in proton conduction. This Streptococcus pyogenes serotype M49 (strain NZ131) protein is ATP synthase subunit delta.